Here is a 109-residue protein sequence, read N- to C-terminus: Large ribosomal subunit protein P1A (109 aa).

Residues 69–84 (APVAGGAAAPAAADGE) are compositionally biased toward low complexity. A disordered region spans residues 69–109 (APVAGGAAAPAAADGEAPAEEKEEAKEEEESDEDMGFGLFD). The segment covering 94-103 (KEEEESDEDM) has biased composition (acidic residues).

Belongs to the eukaryotic ribosomal protein P1/P2 family. Component of the large ribosomal subunit (LSU). Mature yeast ribosomes consist of a small (40S) and a large (60S) subunit. The 40S small subunit contains 1 molecule of ribosomal RNA (18S rRNA) and at least 33 different proteins. The large 60S subunit contains 3 rRNA molecules (25S, 5.8S and 5S rRNA) and at least 46 different proteins. The acidic ribosomal P-proteins form the stalk structure of the 60S subunit. They are organized as a pentameric complex in which uL10/P0 interacts with 2 heterodimers of P1 and P2 proteins.

It is found in the cytoplasm. Functionally, component of the ribosome, a large ribonucleoprotein complex responsible for the synthesis of proteins in the cell. The small ribosomal subunit (SSU) binds messenger RNAs (mRNAs) and translates the encoded message by selecting cognate aminoacyl-transfer RNA (tRNA) molecules. The large subunit (LSU) contains the ribosomal catalytic site termed the peptidyl transferase center (PTC), which catalyzes the formation of peptide bonds, thereby polymerizing the amino acids delivered by tRNAs into a polypeptide chain. The nascent polypeptides leave the ribosome through a tunnel in the LSU and interact with protein factors that function in enzymatic processing, targeting, and the membrane insertion of nascent chains at the exit of the ribosomal tunnel. The chain is Large ribosomal subunit protein P1A (rpp101) from Schizosaccharomyces pombe (strain 972 / ATCC 24843) (Fission yeast).